We begin with the raw amino-acid sequence, 493 residues long: Aerolysin (493 aa).

Residues 1–23 form the signal peptide; sequence MQKIKLTGLSLIISGLLMAQAQA. 2 disulfides stabilise this stretch: Cys-42–Cys-98 and Cys-182–Cys-187. Residues 68–84 are interaction with host N-linked glycan; the sequence is WQISGLANGWVIMGPGY. Positions 256–288 are part of the transmembrane beta-barrel after proteolytic activation of the toxin and insertion into the host membrane; it reads YGLSEKVTTKNKFKWPLVGETELSIEIAANQSW. An interaction with glycans from host GPI-anchor region spans residues 346–355; the sequence is RWGGNAWYTH. The propeptide occupies 446-493; the sequence is AADSKVRRARSVDGAGQGLRLEIPLDAQELSGLGFNNVSLSVTPAANQ.

It belongs to the aerolysin family. As to quaternary structure, homodimer in solution; homoheptamer in the host membrane. After binding to GPI-anchored proteins in target membranes and proteolytic removal of the C-terminal propeptide, the protein assembles into a heptameric pre-pore complex. A further conformation change leads to insertion into the host membrane. In terms of processing, proteolytic cleavage and subsequent release of the propeptide trigger a major conformation change, leading to the formation of a heptameric pre-pore that then inserts into the host membrane.

It localises to the secreted. It is found in the host cell membrane. Functionally, secreted, cytolytic toxin that forms pores in host membranes after proteolytic removal of a C-terminal propeptide, leading to destruction of the membrane permeability barrier and host cell death. The pores are formed by transmembrane beta-strands and are approximately 3 nm in diameter. In Aeromonas hydrophila, this protein is Aerolysin (aerA).